The primary structure comprises 745 residues: Ankyrin repeat and protein kinase domain-containing protein 1 (745 aa).

The Protein kinase domain occupies 34 to 301; it reads EEEWHLVASG…NVAVETDMLL (268 aa). ATP contacts are provided by residues 40–48 and Lys63; that span reads VASGGFSKV. The active-site Proton acceptor is the Asp157. ANK repeat units lie at residues 369–398, 402–431, 435–464, 468–497, 501–530, 534–563, 567–596, 600–629, 633–662, 666–695, and 699–728; these read NRVT…DVDC, SGYT…DTNL, DGWA…LVNA, EGWT…DLSP, EGKT…ELDA, NLRT…LPDA, SGYS…SLEL, QGWT…DLDA, MQWT…NPNA, SGWT…DIHA, and VGWT…QVDV.

This sequence belongs to the protein kinase superfamily. TKL Ser/Thr protein kinase family.

The enzyme catalyses L-seryl-[protein] + ATP = O-phospho-L-seryl-[protein] + ADP + H(+). It catalyses the reaction L-threonyl-[protein] + ATP = O-phospho-L-threonyl-[protein] + ADP + H(+). The protein is Ankyrin repeat and protein kinase domain-containing protein 1 (Ankk1) of Mus musculus (Mouse).